The primary structure comprises 219 residues: uncharacterized protein (219 aa).

A run of 2 helical transmembrane segments spans residues 8-28 (MILFLLVGLAVVLSGCATLSV) and 194-214 (GIPGFEAALAIVGLLAAGLLF).

The protein localises to the cell membrane. This is an uncharacterized protein from Archaeoglobus fulgidus (strain ATCC 49558 / DSM 4304 / JCM 9628 / NBRC 100126 / VC-16).